A 387-amino-acid polypeptide reads, in one-letter code: Formate-dependent phosphoribosylglycinamide formyltransferase (387 aa).

N(1)-(5-phospho-beta-D-ribosyl)glycinamide-binding positions include 21-22 (EL) and Glu81. ATP-binding positions include Arg113, Lys154, 159–164 (SSGHGQ), 193–196 (EEFV), and Glu201. One can recognise an ATP-grasp domain in the interval 118–306 (VFAAETLDLK…EFALHVRAVL (189 aa)). 2 residues coordinate Mg(2+): Glu265 and Glu277. Residues Asp284, Lys352, and 359 to 360 (RR) contribute to the N(1)-(5-phospho-beta-D-ribosyl)glycinamide site.

The protein belongs to the PurK/PurT family. As to quaternary structure, homodimer.

It catalyses the reaction N(1)-(5-phospho-beta-D-ribosyl)glycinamide + formate + ATP = N(2)-formyl-N(1)-(5-phospho-beta-D-ribosyl)glycinamide + ADP + phosphate + H(+). The protein operates within purine metabolism; IMP biosynthesis via de novo pathway; N(2)-formyl-N(1)-(5-phospho-D-ribosyl)glycinamide from N(1)-(5-phospho-D-ribosyl)glycinamide (formate route): step 1/1. Its function is as follows. Involved in the de novo purine biosynthesis. Catalyzes the transfer of formate to 5-phospho-ribosyl-glycinamide (GAR), producing 5-phospho-ribosyl-N-formylglycinamide (FGAR). Formate is provided by PurU via hydrolysis of 10-formyl-tetrahydrofolate. The protein is Formate-dependent phosphoribosylglycinamide formyltransferase of Sulfurovum sp. (strain NBC37-1).